A 293-amino-acid chain; its full sequence is 4-hydroxy-tetrahydrodipicolinate synthase (293 aa).

Threonine 45 is a pyruvate binding site. Residue tyrosine 133 is the Proton donor/acceptor of the active site. Catalysis depends on lysine 161, which acts as the Schiff-base intermediate with substrate. Residue isoleucine 203 participates in pyruvate binding.

The protein belongs to the DapA family. Homotetramer; dimer of dimers.

Its subcellular location is the cytoplasm. It catalyses the reaction L-aspartate 4-semialdehyde + pyruvate = (2S,4S)-4-hydroxy-2,3,4,5-tetrahydrodipicolinate + H2O + H(+). It participates in amino-acid biosynthesis; L-lysine biosynthesis via DAP pathway; (S)-tetrahydrodipicolinate from L-aspartate: step 3/4. Its function is as follows. Catalyzes the condensation of (S)-aspartate-beta-semialdehyde [(S)-ASA] and pyruvate to 4-hydroxy-tetrahydrodipicolinate (HTPA). The sequence is that of 4-hydroxy-tetrahydrodipicolinate synthase from Syntrophotalea carbinolica (strain DSM 2380 / NBRC 103641 / GraBd1) (Pelobacter carbinolicus).